Consider the following 475-residue polypeptide: Sulfate adenylyltransferase subunit 1 (475 aa).

The 215-residue stretch at 25–239 (KSLLRFLTCG…EVLETVEIQR (215 aa)) folds into the tr-type G domain. The interval 34 to 41 (GSVDDGKS) is G1. 34-41 (GSVDDGKS) provides a ligand contact to GTP. The segment at 92–96 (GITID) is G2. Residues 113-116 (DTPG) form a G3 region. Residues 113–117 (DTPGH) and 168–171 (NKMD) each bind GTP. The tract at residues 168 to 171 (NKMD) is G4. The interval 206–208 (SAL) is G5.

This sequence belongs to the TRAFAC class translation factor GTPase superfamily. Classic translation factor GTPase family. CysN/NodQ subfamily. In terms of assembly, heterodimer composed of CysD, the smaller subunit, and CysN.

The enzyme catalyses sulfate + ATP + H(+) = adenosine 5'-phosphosulfate + diphosphate. The protein operates within sulfur metabolism; hydrogen sulfide biosynthesis; sulfite from sulfate: step 1/3. In terms of biological role, with CysD forms the ATP sulfurylase (ATPS) that catalyzes the adenylation of sulfate producing adenosine 5'-phosphosulfate (APS) and diphosphate, the first enzymatic step in sulfur assimilation pathway. APS synthesis involves the formation of a high-energy phosphoric-sulfuric acid anhydride bond driven by GTP hydrolysis by CysN coupled to ATP hydrolysis by CysD. The sequence is that of Sulfate adenylyltransferase subunit 1 from Escherichia coli O139:H28 (strain E24377A / ETEC).